The primary structure comprises 595 residues: Ketol-acid reductoisomerase, chloroplastic (595 aa).

The transit peptide at 1–72 directs the protein to the chloroplast; that stretch reads MAATAATTFS…GGGSALSAQM (72 aa). The 199-residue stretch at 108–306 folds into the KARI N-terminal Rossmann domain; that stretch reads VRGGRNLFPL…ALGSPFTFAT (199 aa). Residues 129 to 136, 162 to 167, and 201 to 205 each bind NADP(+); these read GVIGWGSQ, RKGSNS, and SDSAQ. Histidine 226 is an active-site residue. KARI C-terminal knotted domains lie at 307-455 and 456-592; these read TLEQ…RPAG and DLGP…RPEL. Residues aspartate 315, glutamate 319, glutamate 492, and glutamate 496 each coordinate Mg(2+). Serine 518 lines the substrate pocket.

Belongs to the ketol-acid reductoisomerase family. As to quaternary structure, homodimer. Requires Mg(2+) as cofactor.

The protein resides in the plastid. Its subcellular location is the chloroplast. It carries out the reaction (2R)-2,3-dihydroxy-3-methylbutanoate + NADP(+) = (2S)-2-acetolactate + NADPH + H(+). The catalysed reaction is (2R,3R)-2,3-dihydroxy-3-methylpentanoate + NADP(+) = (S)-2-ethyl-2-hydroxy-3-oxobutanoate + NADPH + H(+). The protein operates within amino-acid biosynthesis; L-isoleucine biosynthesis; L-isoleucine from 2-oxobutanoate: step 2/4. It functions in the pathway amino-acid biosynthesis; L-valine biosynthesis; L-valine from pyruvate: step 2/4. This chain is Ketol-acid reductoisomerase, chloroplastic (AHRI), found in Spinacia oleracea (Spinach).